The primary structure comprises 348 residues: Lysophosphatidic acid receptor 2 (348 aa).

The Extracellular segment spans residues 1 to 30 (MGQCYYNETIGFFYNNSGKELSLHWRPKDV). Residues Asn-7 and Asn-15 are each glycosylated (N-linked (GlcNAc...) asparagine). The helical transmembrane segment at 31–51 (VVVALGLTVSVLVLLTNLLVI) threads the bilayer. Over 52-66 (AAIASNRRFHQPIYY) the chain is Cytoplasmic. The chain crosses the membrane as a helical span at residues 67 to 87 (LLGNLAAADLFAGMAYLFLMF). Topologically, residues 88–104 (HTGPRTARLSIKGWFLR) are extracellular. Residues 105–124 (QGLLDTSLTASVATLLAIAV) traverse the membrane as a helical segment. The Cytoplasmic portion of the chain corresponds to 125–144 (ERHRSVMAVQLHSRLPRGRV). The helical transmembrane segment at 145–165 (VTLIVGVWAAALGLGLLPAHF) threads the bilayer. At 166–185 (WHCLCDLDSCSRMVPLFSRS) the chain is on the extracellular side. The helical transmembrane segment at 186–206 (YLAAWALSSLLVFLLMVAVYT) threads the bilayer. Topologically, residues 207–239 (RIFFYVRRRVERMAEHVSCHPRYRETTLSLVKT) are cytoplasmic. Residues 240–260 (VVIILGAFVVCWTPGQVVLLL) traverse the membrane as a helical segment. Over 261–270 (DGLDCKSCNV) the chain is Extracellular. A helical membrane pass occupies residues 271-291 (LAVEKYFLLLAEANSLVNAVV). The Cytoplasmic segment spans residues 292–348 (YSCRDAEMRRTFRRLLCCMCLRWSSHKSARYSASAQTGASTRIMLPENGRPLMDSTL). Cys-308 is lipidated: S-palmitoyl cysteine. The PDZ-binding motif lies at 345–348 (DSTL).

The protein belongs to the G-protein coupled receptor 1 family. In terms of assembly, interacts with SLC9A3R2/NHERF2, MAGI3 and PLCB3. Interacts with RALA and GRK2. As to expression, most abundantly expressed in testes, kidney, and embryonic brain. Other organs also express the transcript, including heart, lung, spleen, thymus, stomach, and adult brain. Several have little or no expression, including liver, small intestine, and skeletal muscle.

The protein resides in the cell surface. Its subcellular location is the cell membrane. Receptor for lysophosphatidic acid (LPA), a mediator of diverse cellular activities. Seems to be coupled to the G(i)/G(o), G(12)/G(13), and G(q) families of heteromeric G proteins. Plays a key role in phospholipase C-beta (PLC-beta) signaling pathway Stimulates phospholipase C (PLC) activity in a manner that is independent of RALA activation. In Mus musculus (Mouse), this protein is Lysophosphatidic acid receptor 2.